The sequence spans 314 residues: Methionyl-tRNA formyltransferase (314 aa).

111 to 114 contributes to the (6S)-5,6,7,8-tetrahydrofolate binding site; that stretch reads SLLP.

The protein belongs to the Fmt family.

The catalysed reaction is L-methionyl-tRNA(fMet) + (6R)-10-formyltetrahydrofolate = N-formyl-L-methionyl-tRNA(fMet) + (6S)-5,6,7,8-tetrahydrofolate + H(+). Attaches a formyl group to the free amino group of methionyl-tRNA(fMet). The formyl group appears to play a dual role in the initiator identity of N-formylmethionyl-tRNA by promoting its recognition by IF2 and preventing the misappropriation of this tRNA by the elongation apparatus. This Coxiella burnetii (strain CbuK_Q154) (Coxiella burnetii (strain Q154)) protein is Methionyl-tRNA formyltransferase.